The chain runs to 111 residues: Nucleoid-associated protein Clim_0875 (111 aa).

This sequence belongs to the YbaB/EbfC family. In terms of assembly, homodimer.

The protein resides in the cytoplasm. The protein localises to the nucleoid. Binds to DNA and alters its conformation. May be involved in regulation of gene expression, nucleoid organization and DNA protection. This Chlorobium limicola (strain DSM 245 / NBRC 103803 / 6330) protein is Nucleoid-associated protein Clim_0875.